A 456-amino-acid polypeptide reads, in one-letter code: MISRIKSFKNALNYDKMNCIEIILRRNDLMSTSFENKATNRGVITFTISQDKIKPALDKAFNKIKKDLNAPGFRKGHMPRPVFNQKFGEEVLYEDALNIVLPEAYEAAVTELGLDVVAQPKIDVVSMEKGKEWTLSAEVVTKPEVKLGDYKNLVVEVDASKEVSDEDVDAKIERERQNLAELIIKDGEAAQGDTVVIDFVGSVDGVEFDGGKGDNFSLGLGSGQFIPGFEDQLVGAKAGDEVEVNVTFPESYQAEDLAGKAAKFMTTIHEVKTKEVPELDDELAKDIDEDVDTLEDLKVKYRKELEAAQETAYDDAVEGAAIELAVANAEIVDLPEEMIHEEVNRSVNEFMGNMQRQGISPEMYFQLTGTTQEDLHNQYSAEADKRVKTNLVIEAIAKAEGFEATDSEIEQEINDLATEYNMPADQVRSLLSADMLKHDIAMKKAVEVITSTASVK.

In terms of domain architecture, PPIase FKBP-type spans glycine 192 to proline 277.

It belongs to the FKBP-type PPIase family. Tig subfamily.

It localises to the cytoplasm. The enzyme catalyses [protein]-peptidylproline (omega=180) = [protein]-peptidylproline (omega=0). Functionally, involved in protein export. Acts as a chaperone by maintaining the newly synthesized protein in an open conformation. Functions as a peptidyl-prolyl cis-trans isomerase. This chain is Trigger factor, found in Streptococcus pyogenes serotype M12 (strain MGAS9429).